We begin with the raw amino-acid sequence, 146 residues long: Prolactin-inducible protein homolog (146 aa).

The N-terminal stretch at 1–28 (MLTFQFLFRASPATLLLTLYLQLGVITA) is a signal peptide. Residue Q29 is modified to Pyrrolidone carboxylic acid. Cystine bridges form between C65-C91 and C89-C123. Residue N105 is glycosylated (N-linked (GlcNAc...) asparagine).

Belongs to the PIP family. Monomer. Interacts with AZGP1.

The protein localises to the secreted. The sequence is that of Prolactin-inducible protein homolog (PIP) from Cavia porcellus (Guinea pig).